The primary structure comprises 353 residues: tRNA N6-adenosine threonylcarbamoyltransferase (353 aa).

Positions 109 and 113 each coordinate Fe cation. Residues 136-140 (TVSGG), aspartate 169, glycine 182, aspartate 186, and asparagine 284 contribute to the substrate site. Aspartate 312 is a Fe cation binding site.

This sequence belongs to the KAE1 / TsaD family. Requires Fe(2+) as cofactor.

It localises to the cytoplasm. It carries out the reaction L-threonylcarbamoyladenylate + adenosine(37) in tRNA = N(6)-L-threonylcarbamoyladenosine(37) in tRNA + AMP + H(+). In terms of biological role, required for the formation of a threonylcarbamoyl group on adenosine at position 37 (t(6)A37) in tRNAs that read codons beginning with adenine. Is involved in the transfer of the threonylcarbamoyl moiety of threonylcarbamoyl-AMP (TC-AMP) to the N6 group of A37, together with TsaE and TsaB. TsaD likely plays a direct catalytic role in this reaction. The sequence is that of tRNA N6-adenosine threonylcarbamoyltransferase from Chlorobium phaeobacteroides (strain DSM 266 / SMG 266 / 2430).